The chain runs to 187 residues: Elongation factor P (187 aa).

It belongs to the elongation factor P family.

The protein localises to the cytoplasm. The protein operates within protein biosynthesis; polypeptide chain elongation. In terms of biological role, involved in peptide bond synthesis. Stimulates efficient translation and peptide-bond synthesis on native or reconstituted 70S ribosomes in vitro. Probably functions indirectly by altering the affinity of the ribosome for aminoacyl-tRNA, thus increasing their reactivity as acceptors for peptidyl transferase. The chain is Elongation factor P from Chromobacterium violaceum (strain ATCC 12472 / DSM 30191 / JCM 1249 / CCUG 213 / NBRC 12614 / NCIMB 9131 / NCTC 9757 / MK).